The chain runs to 343 residues: Isopentenyl-diphosphate delta-isomerase (343 aa).

9–10 is a binding site for substrate; it reads RK. FMN is bound by residues S66, 67–69, S98, and N126; that span reads SMT. 98–100 is a substrate binding site; that stretch reads SQR. Q161 serves as a coordination point for substrate. Position 162 (E162) interacts with Mg(2+). Residues K193, T223, 273-275, and 294-295 contribute to the FMN site; these read GIR and AA.

The protein belongs to the IPP isomerase type 2 family. As to quaternary structure, homooctamer. Dimer of tetramers. FMN is required as a cofactor. Requires NADPH as cofactor. Mg(2+) serves as cofactor.

It is found in the cytoplasm. It carries out the reaction isopentenyl diphosphate = dimethylallyl diphosphate. In terms of biological role, involved in the biosynthesis of isoprenoids. Catalyzes the 1,3-allylic rearrangement of the homoallylic substrate isopentenyl (IPP) to its allylic isomer, dimethylallyl diphosphate (DMAPP). This is Isopentenyl-diphosphate delta-isomerase from Hydrogenovibrio crunogenus (strain DSM 25203 / XCL-2) (Thiomicrospira crunogena).